We begin with the raw amino-acid sequence, 377 residues long: uncharacterized protein (377 aa).

This is an uncharacterized protein from Magallana gigas (Pacific oyster).